Consider the following 217-residue polypeptide: Superoxide dismutase [Mn], mitochondrial (217 aa).

Residues 1–17 constitute a mitochondrion transit peptide; the sequence is MFVARKISPNCKPGVRG. 4 residues coordinate Mn(2+): His43, His91, Asp175, and His179.

The protein belongs to the iron/manganese superoxide dismutase family. In terms of assembly, homotetramer. Mn(2+) is required as a cofactor.

It localises to the mitochondrion matrix. It catalyses the reaction 2 superoxide + 2 H(+) = H2O2 + O2. Functionally, destroys superoxide anion radicals which are normally produced within the cells and which are toxic to biological systems. The sequence is that of Superoxide dismutase [Mn], mitochondrial (Sod2) from Drosophila melanogaster (Fruit fly).